The primary structure comprises 295 residues: Pyridoxal 5'-phosphate synthase subunit PdxS (295 aa).

Position 25 (Asp-25) interacts with D-ribose 5-phosphate. Lys-82 functions as the Schiff-base intermediate with D-ribose 5-phosphate in the catalytic mechanism. Gly-154 contacts D-ribose 5-phosphate. Arg-166 lines the D-glyceraldehyde 3-phosphate pocket. D-ribose 5-phosphate contacts are provided by residues Gly-215 and 236 to 237 (GS).

It belongs to the PdxS/SNZ family. In the presence of PdxT, forms a dodecamer of heterodimers.

The enzyme catalyses aldehydo-D-ribose 5-phosphate + D-glyceraldehyde 3-phosphate + L-glutamine = pyridoxal 5'-phosphate + L-glutamate + phosphate + 3 H2O + H(+). It functions in the pathway cofactor biosynthesis; pyridoxal 5'-phosphate biosynthesis. Its function is as follows. Catalyzes the formation of pyridoxal 5'-phosphate from ribose 5-phosphate (RBP), glyceraldehyde 3-phosphate (G3P) and ammonia. The ammonia is provided by the PdxT subunit. Can also use ribulose 5-phosphate and dihydroxyacetone phosphate as substrates, resulting from enzyme-catalyzed isomerization of RBP and G3P, respectively. This chain is Pyridoxal 5'-phosphate synthase subunit PdxS, found in Bacillus mycoides (strain KBAB4) (Bacillus weihenstephanensis).